A 78-amino-acid polypeptide reads, in one-letter code: Small ribosomal subunit protein bS18 (78 aa).

It belongs to the bacterial ribosomal protein bS18 family. As to quaternary structure, part of the 30S ribosomal subunit. Forms a tight heterodimer with protein bS6.

Its function is as follows. Binds as a heterodimer with protein bS6 to the central domain of the 16S rRNA, where it helps stabilize the platform of the 30S subunit. This Limosilactobacillus reuteri (strain DSM 20016) (Lactobacillus reuteri) protein is Small ribosomal subunit protein bS18.